A 306-amino-acid chain; its full sequence is Immune protein Tsi7 (306 aa).

Interacts with Tse7.

Immunity protein that plays a role in preventing early activation of toxin Tse7. Protects thereby cells from Tse7 DNase activity. This is Immune protein Tsi7 from Pseudomonas aeruginosa (strain ATCC 15692 / DSM 22644 / CIP 104116 / JCM 14847 / LMG 12228 / 1C / PRS 101 / PAO1).